The primary structure comprises 390 residues: 8-amino-7-oxononanoate synthase (390 aa).

A substrate-binding site is contributed by arginine 22. Residue 109–110 participates in pyridoxal 5'-phosphate binding; that stretch reads GY. Histidine 134 serves as a coordination point for substrate. The pyridoxal 5'-phosphate site is built by serine 180, histidine 208, and threonine 236. Lysine 239 is modified (N6-(pyridoxal phosphate)lysine). Threonine 353 contacts substrate.

The protein belongs to the class-II pyridoxal-phosphate-dependent aminotransferase family. BioF subfamily. Homodimer. Pyridoxal 5'-phosphate is required as a cofactor.

The catalysed reaction is 6-carboxyhexanoyl-[ACP] + L-alanine + H(+) = (8S)-8-amino-7-oxononanoate + holo-[ACP] + CO2. The protein operates within cofactor biosynthesis; biotin biosynthesis. Catalyzes the decarboxylative condensation of pimeloyl-[acyl-carrier protein] and L-alanine to produce 8-amino-7-oxononanoate (AON), [acyl-carrier protein], and carbon dioxide. This chain is 8-amino-7-oxononanoate synthase, found in Azoarcus sp. (strain BH72).